A 356-amino-acid polypeptide reads, in one-letter code: Peptide chain release factor 1 (356 aa).

At Gln-234 the chain carries N5-methylglutamine.

Belongs to the prokaryotic/mitochondrial release factor family. In terms of processing, methylated by PrmC. Methylation increases the termination efficiency of RF1.

It localises to the cytoplasm. Its function is as follows. Peptide chain release factor 1 directs the termination of translation in response to the peptide chain termination codons UAG and UAA. The polypeptide is Peptide chain release factor 1 (Exiguobacterium sp. (strain ATCC BAA-1283 / AT1b)).